A 260-amino-acid chain; its full sequence is MERIETRGLVLYNRNFREDDKLVKIFTEKAGKRMFFVKHASKSKLVASIQPLTYADFIVKINDDGLSYIEDFHQVQPFKNINGDIFKLSYATYILALADAALQDKVYDPALFAFLVKTLDLMESGLDYEVLTNIFEIQLLGRFGISLNFHECAFCHRVGLPFDYSYKYSGVLCPQHYQQDERRAYLDPNVPYLLDQFQAISFDELETISIKPEMKRKLRFFIDQLYEEYVGIHLKSKKFIDDLSSWGQIMKPRTENEETE.

The protein belongs to the RecO family.

Its function is as follows. Involved in DNA repair and RecF pathway recombination. The polypeptide is DNA repair protein RecO (Streptococcus suis (strain 98HAH33)).